Reading from the N-terminus, the 156-residue chain is Persephin (156 aa).

A signal peptide spans 1–21 (MAAGRLRILFLLLLSLHLGLG). Intrachain disulfides connect cysteine 66-cysteine 124, cysteine 93-cysteine 152, and cysteine 97-cysteine 154.

It belongs to the TGF-beta family. GDNF subfamily. In terms of assembly, homodimer; disulfide-linked. Interacts with GFRA4 coreceptor and RET: forms a 2:2:2 ternary complex composed of PSPN ligand, GFRA4 and RET receptor. In terms of tissue distribution, expressed at low levels in substantia nigra. Cochlea.

It localises to the secreted. Functionally, growth factor that exhibits neurotrophic activity on mesencephalic dopaminergic and motor neurons. Acts by binding to its coreceptor, GFRA4, leading to autophosphorylation and activation of the RET receptor. This Rattus norvegicus (Rat) protein is Persephin.